Consider the following 671-residue polypeptide: Arginine--tRNA ligase (671 aa).

The 'HIGH' region signature appears at 124 to 134; sequence PNVAKPMHVGH. The tract at residues 223 to 254 is disordered; the sequence is KSDAKTAKEVSDQSESDENLKPKDKKKLRKNA. The segment covering 224–233 has biased composition (basic and acidic residues); sequence SDAKTAKEVS.

This sequence belongs to the class-I aminoacyl-tRNA synthetase family. Monomer.

The protein resides in the cytoplasm. The enzyme catalyses tRNA(Arg) + L-arginine + ATP = L-arginyl-tRNA(Arg) + AMP + diphosphate. This is Arginine--tRNA ligase from Rhodopirellula baltica (strain DSM 10527 / NCIMB 13988 / SH1).